Reading from the N-terminus, the 208-residue chain is Interleukin-6 (208 aa).

Positions 1–20 are cleaved as a signal peptide; it reads MNSLSTIAFSLGLLLVTATA. Residues Cys-67 and Cys-73 are joined by a disulfide bond. Phosphoserine is present on Ser-76. Residues Cys-96 and Cys-106 are joined by a disulfide bond. An N-linked (GlcNAc...) asparagine glycan is attached at Asn-167.

Belongs to the IL-6 superfamily. In terms of assembly, component of a hexamer of two molecules each of IL6, IL6R and IL6ST; first binds to IL6R to associate with the signaling subunit IL6ST. Interacts with IL6R (via the N-terminal ectodomain); this interaction may be affected by IL6R-binding with SORL1, hence decreasing IL6 cis signaling. Interacts with SORL1 (via the N-terminal ectodomain); this interaction leads to IL6 internalization and lysosomal degradation. May form a trimeric complex with the soluble SORL1 ectodomain and soluble IL6R receptor; this interaction might stabilize circulating IL6, hence promoting IL6 trans signaling.

It localises to the secreted. In terms of biological role, cytokine with a wide variety of biological functions in immunity, tissue regeneration, and metabolism. Binds to IL6R, then the complex associates to the signaling subunit IL6ST/gp130 to trigger the intracellular IL6-signaling pathway. The interaction with the membrane-bound IL6R and IL6ST stimulates 'classic signaling', whereas the binding of IL6 and soluble IL6R to IL6ST stimulates 'trans-signaling'. Alternatively, 'cluster signaling' occurs when membrane-bound IL6:IL6R complexes on transmitter cells activate IL6ST receptors on neighboring receiver cells. Functionally, IL6 is a potent inducer of the acute phase response. Rapid production of IL6 contributes to host defense during infection and tissue injury, but excessive IL6 synthesis is involved in disease pathology. In the innate immune response, is synthesized by myeloid cells, such as macrophages and dendritic cells, upon recognition of pathogens through toll-like receptors (TLRs) at the site of infection or tissue injury. In the adaptive immune response, is required for the differentiation of B cells into immunoglobulin-secreting cells. Plays a major role in the differentiation of CD4(+) T cell subsets. Essential factor for the development of T follicular helper (Tfh) cells that are required for the induction of germinal-center formation. Required to drive naive CD4(+) T cells to the Th17 lineage. Also required for proliferation of myeloma cells and the survival of plasmablast cells. Its function is as follows. Acts as an essential factor in bone homeostasis and on vessels directly or indirectly by induction of VEGF, resulting in increased angiogenesis activity and vascular permeability. Induces, through 'trans-signaling' and synergistically with IL1B and TNF, the production of VEGF. Involved in metabolic controls, is discharged into the bloodstream after muscle contraction increasing lipolysis and improving insulin resistance. 'Trans-signaling' in central nervous system also regulates energy and glucose homeostasis. Mediates, through GLP-1, crosstalk between insulin-sensitive tissues, intestinal L cells and pancreatic islets to adapt to changes in insulin demand. Also acts as a myokine. Plays a protective role during liver injury, being required for maintenance of tissue regeneration. Also has a pivotal role in iron metabolism by regulating HAMP/hepcidin expression upon inflammation or bacterial infection. Through activation of IL6ST-YAP-NOTCH pathway, induces inflammation-induced epithelial regeneration. This Delphinapterus leucas (Beluga whale) protein is Interleukin-6 (IL6).